Here is a 623-residue protein sequence, read N- to C-terminus: UvrABC system protein C (623 aa).

The 79-residue stretch at 27–105 (GSPGVYRMLD…IKQLKPRYNV (79 aa)) folds into the GIY-YIG domain. The UVR domain occupies 215–250 (TKVQANLAEQMQAASEAMEFERAAALRDRIKALTQV).

It belongs to the UvrC family. Interacts with UvrB in an incision complex.

The protein resides in the cytoplasm. Its function is as follows. The UvrABC repair system catalyzes the recognition and processing of DNA lesions. UvrC both incises the 5' and 3' sides of the lesion. The N-terminal half is responsible for the 3' incision and the C-terminal half is responsible for the 5' incision. The sequence is that of UvrABC system protein C from Cereibacter sphaeroides (strain ATCC 17023 / DSM 158 / JCM 6121 / CCUG 31486 / LMG 2827 / NBRC 12203 / NCIMB 8253 / ATH 2.4.1.) (Rhodobacter sphaeroides).